Here is a 254-residue protein sequence, read N- to C-terminus: DNA repair protein RecO (254 aa).

The protein belongs to the RecO family.

In terms of biological role, involved in DNA repair and RecF pathway recombination. The chain is DNA repair protein RecO from Verminephrobacter eiseniae (strain EF01-2).